Consider the following 86-residue polypeptide: Large ribosomal subunit protein bL27 (86 aa).

The tract at residues Met-1–Lys-24 is disordered.

It belongs to the bacterial ribosomal protein bL27 family.

The chain is Large ribosomal subunit protein bL27 from Rickettsia conorii (strain ATCC VR-613 / Malish 7).